The primary structure comprises 387 residues: Phosphoglycerate kinase (387 aa).

Substrate is bound by residues 21–23, R36, 59–62, R113, and R146; these read DLN and HLGR. ATP is bound by residues K197, E314, and 340-343; that span reads GGDT.

The protein belongs to the phosphoglycerate kinase family. Monomer.

It is found in the cytoplasm. The catalysed reaction is (2R)-3-phosphoglycerate + ATP = (2R)-3-phospho-glyceroyl phosphate + ADP. The protein operates within carbohydrate degradation; glycolysis; pyruvate from D-glyceraldehyde 3-phosphate: step 2/5. This chain is Phosphoglycerate kinase, found in Pseudomonas savastanoi pv. phaseolicola (strain 1448A / Race 6) (Pseudomonas syringae pv. phaseolicola (strain 1448A / Race 6)).